The primary structure comprises 255 residues: MAVGKNKRLSKGKKGLKKRVVDPFTRKEWYDIKAPSTFENRNVGKTLVNKSVGLKNASDSLKGRVVEVCLADLQGSEDHSFRKVKLRVDEVQGKNLLTNFHGMDFTTDKLRSMVRKWQTLIEANVTVKTSDDYVLRIFAIAFTRKQANQVKRTSYAQSSHIRQIRKVISEILTREVQNSTLAQLTSKLIPEVINKEIENATKDIFPLQNVHIRKVKLLKQPKFDLGSLLSLHGEASAEEKGKKVAGFKDEILETV.

N-acetylalanine; partial is present on alanine 2.

Belongs to the eukaryotic ribosomal protein eS1 family. Component of the small ribosomal subunit. Mature ribosomes consist of a small (40S) and a large (60S) subunit. The 40S subunit contains about 33 different proteins and 1 molecule of RNA (18S). The 60S subunit contains about 49 different proteins and 3 molecules of RNA (25S, 5.8S and 5S).

The protein resides in the cytoplasm. The sequence is that of Small ribosomal subunit protein eS1 from Kluyveromyces lactis (strain ATCC 8585 / CBS 2359 / DSM 70799 / NBRC 1267 / NRRL Y-1140 / WM37) (Yeast).